The following is a 278-amino-acid chain: Putative carbamate hydrolase RutD (278 aa).

It belongs to the AB hydrolase superfamily. Hydrolase RutD family.

It catalyses the reaction carbamate + 2 H(+) = NH4(+) + CO2. Functionally, involved in pyrimidine catabolism. May facilitate the hydrolysis of carbamate, a reaction that can also occur spontaneously. This Yersinia enterocolitica serotype O:8 / biotype 1B (strain NCTC 13174 / 8081) protein is Putative carbamate hydrolase RutD.